The primary structure comprises 719 residues: Alpha-galactosidase 2 (719 aa).

Asp472 serves as the catalytic Nucleophile. The Proton donor role is filled by Asp542.

It belongs to the glycosyl hydrolase 36 family.

The enzyme catalyses Hydrolysis of terminal, non-reducing alpha-D-galactose residues in alpha-D-galactosides, including galactose oligosaccharides, galactomannans and galactolipids.. Functionally, alpha-galactosidase associated with the sucrase operon. The chain is Alpha-galactosidase 2 (agaS) from Pediococcus pentosaceus.